Reading from the N-terminus, the 136-residue chain is Protein NrdI (136 aa).

Belongs to the NrdI family.

Its function is as follows. Probably involved in ribonucleotide reductase function. In Salmonella typhi, this protein is Protein NrdI.